Here is a 439-residue protein sequence, read N- to C-terminus: Maintenance of mitochondrial morphology protein 1 (439 aa).

Over 1-76 (MSQDLIETTA…NGNTWSFTQG (76 aa)) the chain is Lumenal. The chain crosses the membrane as a helical span at residues 77-97 (LVIGQVSVIFIIIVFVKFFVF). Over 98 to 439 (ADSSSHIPTK…TPGEYVNSNI (342 aa)) the chain is Cytoplasmic. Disordered regions lie at residues 125–145 (KHSN…SLDS), 309–336 (MNGY…DGGT), and 405–425 (REPV…GTSA). An SMP-LTD domain is found at 165 to 395 (ASESLDWFNV…EPRFQVVRLP (231 aa)). Composition is skewed to low complexity over residues 315–326 (ENANGDGASSSN) and 410–424 (KKTT…NGTS).

This sequence belongs to the MMM1 family. In terms of assembly, homodimer. Component of the ER-mitochondria encounter structure (ERMES) or MDM complex, composed of MMM1, MDM10, MDM12 and MDM34. An MMM1 homodimer associates with one molecule of MDM12 on each side in a pairwise head-to-tail manner, and the SMP-LTD domains of MMM1 and MDM12 generate a continuous hydrophobic tunnel for phospholipid trafficking.

Its subcellular location is the endoplasmic reticulum membrane. Its function is as follows. Component of the ERMES/MDM complex, which serves as a molecular tether to connect the endoplasmic reticulum (ER) and mitochondria. Components of this complex are involved in the control of mitochondrial shape and protein biogenesis, and function in nonvesicular lipid trafficking between the ER and mitochondria. The MDM12-MMM1 subcomplex functions in the major beta-barrel assembly pathway that is responsible for biogenesis of all outer membrane beta-barrel proteins, and acts in a late step after the SAM complex. The MDM10-MDM12-MMM1 subcomplex further acts in the TOM40-specific pathway after the action of the MDM12-MMM1 complex. Essential for establishing and maintaining the structure of mitochondria and maintenance of mtDNA nucleoids. The chain is Maintenance of mitochondrial morphology protein 1 from Candida albicans (strain SC5314 / ATCC MYA-2876) (Yeast).